The sequence spans 67 residues: ATP synthase F(0) complex subunit 8 (67 aa).

The helical transmembrane segment at 8-24 threads the bilayer; sequence TWLIMISSMILTLFITF. K54 is subject to N6-acetyllysine; alternate. An N6-succinyllysine; alternate modification is found at K54. Residue K57 is modified to N6-acetyllysine.

The protein belongs to the ATPase protein 8 family. As to quaternary structure, component of the ATP synthase complex composed at least of ATP5F1A/subunit alpha, ATP5F1B/subunit beta, ATP5MC1/subunit c (homooctomer), MT-ATP6/subunit a, MT-ATP8/subunit 8, ATP5ME/subunit e, ATP5MF/subunit f, ATP5MG/subunit g, ATP5MK/subunit k, ATP5MJ/subunit j, ATP5F1C/subunit gamma, ATP5F1D/subunit delta, ATP5F1E/subunit epsilon, ATP5PF/subunit F6, ATP5PB/subunit b, ATP5PD/subunit d, ATP5PO/subunit OSCP. ATP synthase complex consists of a soluble F(1) head domain (subunits alpha(3) and beta(3)) - the catalytic core - and a membrane F(0) domain - the membrane proton channel (subunits c, a, 8, e, f, g, k and j). These two domains are linked by a central stalk (subunits gamma, delta, and epsilon) rotating inside the F1 region and a stationary peripheral stalk (subunits F6, b, d, and OSCP). Interacts with PRICKLE3.

The protein localises to the mitochondrion membrane. In terms of biological role, subunit 8, of the mitochondrial membrane ATP synthase complex (F(1)F(0) ATP synthase or Complex V) that produces ATP from ADP in the presence of a proton gradient across the membrane which is generated by electron transport complexes of the respiratory chain. ATP synthase complex consist of a soluble F(1) head domain - the catalytic core - and a membrane F(1) domain - the membrane proton channel. These two domains are linked by a central stalk rotating inside the F(1) region and a stationary peripheral stalk. During catalysis, ATP synthesis in the catalytic domain of F(1) is coupled via a rotary mechanism of the central stalk subunits to proton translocation. In vivo, can only synthesize ATP although its ATP hydrolase activity can be activated artificially in vitro. Part of the complex F(0) domain. This Halichoerus grypus (Gray seal) protein is ATP synthase F(0) complex subunit 8.